We begin with the raw amino-acid sequence, 352 residues long: MSVNTNEGSKNLWKDLPLELLSSVMTFLEIKDNVRASVVCKSWFEAAVSVRVIDKSPWLMYFPETKNTYDFYDPSNCKKYTMELPKSLVGFIVRYSKDGWLLMSQEDSSHFVLFNPFTMDVVALPFLHLFTYYQLVGFSSAPTSSECVVFTIKDYDPGHVTIRTWSPGQTMWTSMQVESQFLDVDHNNVVFSNGVFYCLNQRNHVAVFDPSLRTWNVLDVPPPRCPDDKSWNEGKFMVGYKGDILVIRTYENKDPLVFKLDLTRGIWEEKDTLGSLTIFVSRKSCESRTYVKDGMLRNSVYFPELCYNEKQSVVYSFDEGRYHLREHDLDWGKQLSSDNIWIEPPKNAFELV.

The F-box domain occupies 10–56; it reads KNLWKDLPLELLSSVMTFLEIKDNVRASVVCKSWFEAAVSVRVIDKS. Kelch repeat units follow at residues 148–189 and 190–234; these read VVFT…HNNV and VFSN…WNEG.

The protein is F-box/kelch-repeat protein At1g57790 of Arabidopsis thaliana (Mouse-ear cress).